Here is a 255-residue protein sequence, read N- to C-terminus: MKVKVFDLNGQPVGEIELPKVFFTPFRPDLIRRAVIASWTHRIQPQGRDPMAGKRRVTENIGKGHSMARVERLKTPPRYAAFVPFARGGRRTHPPKVEKIIWEDINKKEKRLALMSAIAATANYDLVRARGHIIDNVPQLPLIVVDDLQKVQKTRETREIFKKLGIWDDIVRAKEKSGVRAGKGKMRGRRYKKAKGPLIVVGKNEGIVLGARNHPGVDVVVVDNLGVEHLAPGTHPGRLTVWTVSAIERLRELYG.

The protein belongs to the universal ribosomal protein uL4 family. In terms of assembly, part of the 50S ribosomal subunit.

One of the primary rRNA binding proteins, this protein initially binds near the 5'-end of the 23S rRNA. It is important during the early stages of 50S assembly. It makes multiple contacts with different domains of the 23S rRNA in the assembled 50S subunit and ribosome. Its function is as follows. Forms part of the polypeptide exit tunnel. The protein is Large ribosomal subunit protein uL4 of Pyrococcus furiosus (strain ATCC 43587 / DSM 3638 / JCM 8422 / Vc1).